The chain runs to 326 residues: tRNA-modifying protein YgfZ (326 aa).

Trp27 and Trp189 together coordinate folate.

It belongs to the tRNA-modifying YgfZ family.

The protein localises to the cytoplasm. Functionally, folate-binding protein involved in regulating the level of ATP-DnaA and in the modification of some tRNAs. It is probably a key factor in regulatory networks that act via tRNA modification, such as initiation of chromosomal replication. This is tRNA-modifying protein YgfZ from Escherichia coli (strain SMS-3-5 / SECEC).